A 585-amino-acid polypeptide reads, in one-letter code: Dihydroxy-acid dehydratase, mitochondrial (585 aa).

The transit peptide at 1–20 directs the protein to the mitochondrion; the sequence is MGLLTKVATSRQFSTTRCVA. Cys70 contributes to the [2Fe-2S] cluster binding site. Position 102 (Asp102) interacts with Mg(2+). Cys143 is a binding site for [2Fe-2S] cluster. Residue Asp144 participates in Mg(2+) binding. Cys221 contributes to the [2Fe-2S] cluster binding site. Glu474 is a binding site for Mg(2+). Ser500 functions as the Proton acceptor in the catalytic mechanism.

It belongs to the IlvD/Edd family. Requires [2Fe-2S] cluster as cofactor. The cofactor is Mg(2+).

The protein resides in the mitochondrion. The catalysed reaction is (2R)-2,3-dihydroxy-3-methylbutanoate = 3-methyl-2-oxobutanoate + H2O. The enzyme catalyses (2R,3R)-2,3-dihydroxy-3-methylpentanoate = (S)-3-methyl-2-oxopentanoate + H2O. The protein operates within amino-acid biosynthesis; L-isoleucine biosynthesis; L-isoleucine from 2-oxobutanoate: step 3/4. Its pathway is amino-acid biosynthesis; L-valine biosynthesis; L-valine from pyruvate: step 3/4. Its activity is regulated as follows. Catalytic activity is inactivated under iron-limiting conditions. Its function is as follows. Dihydroxyacid dehydratase that catalyzes the third step in the common pathway leading to biosynthesis of branched-chain amino acids. Catalyzes the dehydration of (2R,3R)-2,3-dihydroxy-3-methylpentanoate (2,3-dihydroxy-3-methylvalerate) into 2-oxo-3-methylpentanoate (2-oxo-3-methylvalerate) and of (2R)-2,3-dihydroxy-3-methylbutanoate (2,3-dihydroxyisovalerate) into 2-oxo-3-methylbutanoate (2-oxoisovalerate), the penultimate precursor to L-isoleucine and L-valine, respectively. Required for the synthesis of alpha-isopropylmalate which modulates the activity of LEU3 and subsequently regulates the expression of LEU1. The polypeptide is Dihydroxy-acid dehydratase, mitochondrial (Saccharomyces cerevisiae (strain ATCC 204508 / S288c) (Baker's yeast)).